Reading from the N-terminus, the 89-residue chain is Small ribosomal subunit protein uS15 (89 aa).

It belongs to the universal ribosomal protein uS15 family. Part of the 30S ribosomal subunit. Forms a bridge to the 50S subunit in the 70S ribosome, contacting the 23S rRNA.

Functionally, one of the primary rRNA binding proteins, it binds directly to 16S rRNA where it helps nucleate assembly of the platform of the 30S subunit by binding and bridging several RNA helices of the 16S rRNA. Its function is as follows. Forms an intersubunit bridge (bridge B4) with the 23S rRNA of the 50S subunit in the ribosome. This chain is Small ribosomal subunit protein uS15, found in Cereibacter sphaeroides (strain ATCC 17025 / ATH 2.4.3) (Rhodobacter sphaeroides).